We begin with the raw amino-acid sequence, 305 residues long: Plant-type L-asparaginase (305 aa).

Threonine 175 (nucleophile) is an active-site residue. Residues 202 to 205 (RVGD) and 224 to 227 (TGLG) contribute to the substrate site.

This sequence belongs to the Ntn-hydrolase family. As to quaternary structure, heterotetramer of two alpha and two beta chains arranged as a dimer of alpha/beta heterodimers. Autocleaved. Generates the alpha and beta subunits. The N-terminal residue of the beta subunit is thought to be responsible for the nucleophile hydrolase activity.

The enzyme catalyses L-asparagine + H2O = L-aspartate + NH4(+). Its function is as follows. Catalyzes the hydrolysis of L-asparagine into L-aspartate and ammonia. The chain is Plant-type L-asparaginase from Pyrococcus horikoshii (strain ATCC 700860 / DSM 12428 / JCM 9974 / NBRC 100139 / OT-3).